A 422-amino-acid chain; its full sequence is Nuclear hormone receptor family member nhr-54 (422 aa).

The segment at residues 14 to 92 (SVKCAICYKA…LGMTTENVRT (79 aa)) is a DNA-binding region (nuclear receptor). 2 NR C4-type zinc fingers span residues 17 to 37 (CAIC…CRAC) and 53 to 80 (CTRK…FKKC). The 262-residue stretch at 161–422 (PDDDVIVELN…VFTEPEFFRV (262 aa)) folds into the NR LBD domain.

Belongs to the nuclear hormone receptor family.

It localises to the nucleus. Functionally, orphan nuclear receptor. The sequence is that of Nuclear hormone receptor family member nhr-54 (nhr-54) from Caenorhabditis elegans.